The sequence spans 229 residues: Large ribosomal subunit protein uL1 (229 aa).

It belongs to the universal ribosomal protein uL1 family. Part of the 50S ribosomal subunit.

Its function is as follows. Binds directly to 23S rRNA. The L1 stalk is quite mobile in the ribosome, and is involved in E site tRNA release. Protein L1 is also a translational repressor protein, it controls the translation of the L11 operon by binding to its mRNA. This Streptococcus thermophilus (strain CNRZ 1066) protein is Large ribosomal subunit protein uL1.